The primary structure comprises 180 residues: MKQRLKQLYMETIVPKLMEKFKYKNIHQVPRIKKIVINRGIGEASQSNKILESSFKELNLIAGQKGVITRSKKAIATFKLRKNVPVGVTVTLRGERMYGFLDRMINLALPRIRDFQGINPKSFDKFGSYSLGLEEQLMFPEMEYDKIDQICGMDISIVTTSTKIEEGLILLKEFGLPFKN.

The protein belongs to the universal ribosomal protein uL5 family. As to quaternary structure, part of the 50S ribosomal subunit; contacts the 5S rRNA.

The protein resides in the plastid. It is found in the chloroplast. Binds 5S rRNA, forms part of the central protuberance of the 50S subunit. The sequence is that of Large ribosomal subunit protein uL5c (rpl5) from Oedogonium cardiacum (Filamentous green alga).